Reading from the N-terminus, the 361-residue chain is tRNA/tmRNA (uracil-C(5))-methyltransferase (361 aa).

S-adenosyl-L-methionine is bound by residues Gln183, Tyr211, Asn216, Glu232, and Asp294. Residue Cys319 is the Nucleophile of the active site. Glu353 (proton acceptor) is an active-site residue.

This sequence belongs to the class I-like SAM-binding methyltransferase superfamily. RNA M5U methyltransferase family. TrmA subfamily.

It carries out the reaction uridine(54) in tRNA + S-adenosyl-L-methionine = 5-methyluridine(54) in tRNA + S-adenosyl-L-homocysteine + H(+). The enzyme catalyses uridine(341) in tmRNA + S-adenosyl-L-methionine = 5-methyluridine(341) in tmRNA + S-adenosyl-L-homocysteine + H(+). In terms of biological role, dual-specificity methyltransferase that catalyzes the formation of 5-methyluridine at position 54 (m5U54) in all tRNAs, and that of position 341 (m5U341) in tmRNA (transfer-mRNA). The chain is tRNA/tmRNA (uracil-C(5))-methyltransferase from Acinetobacter baumannii (strain AB307-0294).